The primary structure comprises 184 residues: Gremlin-1 (184 aa).

An N-terminal signal peptide occupies residues 1–24 (MSRTAYTVGALLLLLGTLLPAAEG). The tract at residues 24 to 77 (GKKKGSQGAIPPPDKAQHNDSEQTQSPQQPGSRNRGRGQGRGTAMPGEEVLESS) is disordered. N42 carries an N-linked (GlcNAc...) asparagine glycan. 4 disulfides stabilise this stretch: C94/C144, C108/C158, C118/C176, and C122/C178. The CTCK domain maps to 94–184 (CKTQPLKQTI…QCRCISIDLD (91 aa)).

It belongs to the DAN family. In terms of assembly, homodimer; can also form homooligomers. Interacts with BMP2; can form higher oligomers with BMP2. Interacts with SLIT1 and SLIT2 in a glycosylation-dependent manner. As to expression, highly expressed in small intestine, fetal brain and colon. Expression is restricted to intestinal subepithelial myofibroblasts (ISEMFs) at the crypt base. In subjects with HMPS1, by contrast, GREM1 is expressed, not only in basal ISEMFs, but also at very high levels in epithelial cells (predominantly colonocytes), with expression extending most of the way up the sides of the crypt. Weakly expressed in brain, ovary, prostate, pancreas and skeletal muscle. In brain found in the region localized around the internal capsule in the large subcortical nuclei, including caudate, putamen, substantia nigra, thalamus and subthalamus. Predominantly expressed in normal cells including neurons, astrocytes and fibroblasts.

Its subcellular location is the secreted. In terms of biological role, cytokine that may play an important role during carcinogenesis and metanephric kidney organogenesis, as a BMP antagonist required for early limb outgrowth and patterning in maintaining the FGF4-SHH feedback loop. Down-regulates the BMP4 signaling in a dose-dependent manner. Antagonist of BMP2; inhibits BMP2-mediated differentiation of osteoblasts (in vitro). Acts as inhibitor of monocyte chemotaxis. Can inhibit the growth or viability of normal cells but not transformed cells when is overexpressed. The polypeptide is Gremlin-1 (GREM1) (Homo sapiens (Human)).